Consider the following 639-residue polypeptide: UPF0313 protein CLJ_B0249 (639 aa).

The Radical SAM core domain occupies 295–566 (AIKEVKFSIT…RMQRSLLQFS (272 aa)). [4Fe-4S] cluster contacts are provided by Cys-309, Cys-313, and Cys-316. The interval 597 to 639 (YNKPYKKSHKKNNAKNKNNNYNKNKDVSKKNKKNSLSKHKKRK) is disordered. 2 stretches are compositionally biased toward basic residues: residues 600 to 610 (PYKKSHKKNNA) and 626 to 639 (KNKKNSLSKHKKRK).

This sequence belongs to the UPF0313 family. Requires [4Fe-4S] cluster as cofactor.

The sequence is that of UPF0313 protein CLJ_B0249 from Clostridium botulinum (strain 657 / Type Ba4).